The sequence spans 718 residues: Kinesin-like protein KIF2C (718 aa).

Positions 1–248 (MESLPARLFP…CHPLTLTDPT (248 aa)) are globular. Ser-3 and Ser-19 each carry phosphoserine. Residues 86 to 111 (PKQKRRSVNSKIPAPKEGLRSRSTRM) are disordered. Ser-92 bears the Phosphoserine; by AURKB mark. The Microtubule tip localization signal motif lies at 95–98 (SKIP). Phosphoserine is present on residues Ser-106, Ser-108, Ser-112, Ser-163, and Ser-186. Positions 201–232 (EKRAQNSEIRIKRAQEYDSSFPNWEFARMIKE) are negative regulator of microtubule-binding. Positions 252–582 (RICVCVRKRP…LRYADRVKEL (331 aa)) constitute a Kinesin motor domain. Residues Arg-258 and 342 to 349 (GQTGSGKT) each bind ATP. The Nuclear localization signal signature appears at 409 to 412 (KKAK). A phosphoserine mark is found at Ser-513 and Ser-626. Coiled coils occupy residues 613–651 (NFKE…IIQQ) and 689–716 (ALRE…SKKR).

This sequence belongs to the TRAFAC class myosin-kinesin ATPase superfamily. Kinesin family. MCAK/KIF2 subfamily. In terms of assembly, interacts with CENPH. Interacts with MTUS2/TIP150; the interaction is direct. Interacts with MAPRE1; the interaction is direct, regulated by phosphorylation and is probably required for targeting to growing microtubule plus ends. Interacts with KIF18B at microtubule tips; this interaction increases the affinity of both partners for microtubule plus ends and is required for robust microtubule depolymerization. Phosphorylation by AURKA or AURKB strongly reduces KIF18B-binding. Post-translationally, phosphorylation by AURKB, regulates association with centromeres and kinetochores and the microtubule depolymerization activity. In terms of processing, ubiquitinated.

It is found in the cytoplasm. It localises to the cytoskeleton. The protein resides in the nucleus. Its subcellular location is the chromosome. The protein localises to the centromere. It is found in the kinetochore. In terms of biological role, in complex with KIF18B, constitutes the major microtubule plus-end depolymerizing activity in mitotic cells. Regulates the turnover of microtubules at the kinetochore and functions in chromosome segregation during mitosis. Plays a role in chromosome congression and is required for the lateral to end-on conversion of the chromosome-microtubule attachment. The polypeptide is Kinesin-like protein KIF2C (KIF2C) (Cricetulus griseus (Chinese hamster)).